We begin with the raw amino-acid sequence, 138 residues long: Protein FAM136A (138 aa).

At A2 the chain carries N-acetylalanine. Phosphothreonine is present on residues T124 and T126.

This sequence belongs to the FAM136 family.

This is Protein FAM136A (Fam136a) from Mus musculus (Mouse).